The primary structure comprises 423 residues: Haloacid dehalogenase-like hydrolase domain-containing 5 (423 aa).

Residues 1–23 (MAAWGCVAALGAARGLCWRAARA) form the signal peptide.

This sequence belongs to the HAD-like hydrolase superfamily. In terms of tissue distribution, widely expressed.

The sequence is that of Haloacid dehalogenase-like hydrolase domain-containing 5 from Homo sapiens (Human).